We begin with the raw amino-acid sequence, 301 residues long: Cuticle collagen 1 (301 aa).

An N-terminal signal peptide occupies residues 1–37; sequence METDGRLKAYKFVAYAAVGFSIAAVASVLLTLPMVYS. Residues 79 to 82 form a furin-like endopeptidase recognition region region; sequence RTTR. Triple-helical region stretches follow at residues 105 to 134, 153 to 179, 183 to 209, and 218 to 283; these read GPPG…PGKP, GPPG…PGTD, GSPG…PGTP, and GAPG…KGIC. Positions 109-284 are disordered; sequence PAGAPGKPGK…GTPGEKGICP (176 aa). Pro residues-rich tracts occupy residues 131–164 and 184–193; these read PGKP…PGAP and SPGPRGPPGP. A compositionally biased stretch (low complexity) spans 194–210; the sequence is AGEAGAPGPAGEPGTPA. Over residues 226–258 the composition is skewed to pro residues; it reads SGPPGPPGPPGAPGNDGPPGPPGPKGAPGPDGP.

The protein belongs to the cuticular collagen family. As to quaternary structure, collagen polypeptide chains are complexed within the cuticle by disulfide bonds and other types of covalent cross-links.

It is found in the secreted. The protein localises to the extracellular space. In terms of biological role, secreted collagen that forms part of the nematode cuticle, which functions as an exoskeleton and a barrier to protect the worm from its environment. Secretion and subsequent incorporation into the cuticle is likely mediated by bli-4, which probably cleaves at the N-terminal consensus furin cleavage site. The polypeptide is Cuticle collagen 1 (sqt-3) (Caenorhabditis elegans).